Here is a 348-residue protein sequence, read N- to C-terminus: Selenide, water dikinase (348 aa).

Residue C17 is part of the active site. Residues K20 and 48–50 (TSD) each bind ATP. Position 51 (D51) interacts with Mg(2+). ATP contacts are provided by residues D68, D91, and 139 to 141 (GHT). D91 is a binding site for Mg(2+). D227 is a binding site for Mg(2+).

This sequence belongs to the selenophosphate synthase 1 family. Class I subfamily. Homodimer. The cofactor is Mg(2+).

The catalysed reaction is hydrogenselenide + ATP + H2O = selenophosphate + AMP + phosphate + 2 H(+). Its function is as follows. Synthesizes selenophosphate from selenide and ATP. This chain is Selenide, water dikinase, found in Dechloromonas aromatica (strain RCB).